We begin with the raw amino-acid sequence, 471 residues long: Alpha-galactosidase 6 (471 aa).

The signal sequence occupies residues 1–18 (MFAFYFLTACISLKGVFG). A disulfide bridge links C42 with C74. The substrate site is built by D72 and D73. N-linked (GlcNAc...) asparagine glycosylation is present at N105. C121 and C151 are disulfide-bonded. K147 is a binding site for substrate. D149 functions as the Nucleophile in the catalytic mechanism. The N-linked (GlcNAc...) asparagine glycan is linked to N175. Substrate is bound at residue R205. D209 functions as the Proton donor in the catalytic mechanism. Cystine bridges form between C221/C237 and C223/C230. A substrate-binding site is contributed by Q251. Residues N270, N370, N403, N422, N435, and N454 are each glycosylated (N-linked (GlcNAc...) asparagine).

This sequence belongs to the glycosyl hydrolase 27 family. As to quaternary structure, homotetramer.

The protein resides in the secreted. It carries out the reaction Hydrolysis of terminal, non-reducing alpha-D-galactose residues in alpha-D-galactosides, including galactose oligosaccharides, galactomannans and galactolipids.. This is Alpha-galactosidase 6 (MEL6) from Saccharomyces cerevisiae (Baker's yeast).